The chain runs to 256 residues: Thiazole synthase (256 aa).

The active-site Schiff-base intermediate with DXP is K95. 1-deoxy-D-xylulose 5-phosphate-binding positions include G156, 182 to 183, and 204 to 205; these read AG and NT.

Belongs to the ThiG family. In terms of assembly, homotetramer. Forms heterodimers with either ThiH or ThiS.

The protein localises to the cytoplasm. The catalysed reaction is [ThiS sulfur-carrier protein]-C-terminal-Gly-aminoethanethioate + 2-iminoacetate + 1-deoxy-D-xylulose 5-phosphate = [ThiS sulfur-carrier protein]-C-terminal Gly-Gly + 2-[(2R,5Z)-2-carboxy-4-methylthiazol-5(2H)-ylidene]ethyl phosphate + 2 H2O + H(+). Its pathway is cofactor biosynthesis; thiamine diphosphate biosynthesis. Functionally, catalyzes the rearrangement of 1-deoxy-D-xylulose 5-phosphate (DXP) to produce the thiazole phosphate moiety of thiamine. Sulfur is provided by the thiocarboxylate moiety of the carrier protein ThiS. In vitro, sulfur can be provided by H(2)S. The polypeptide is Thiazole synthase (Enterobacter sp. (strain 638)).